Here is a 390-residue protein sequence, read N- to C-terminus: Alcohol dehydrogenase-like 7 (390 aa).

Cys-56, Ser-58, His-78, Cys-108, Cys-111, Cys-114, Cys-122, and Cys-187 together coordinate Zn(2+). Residues Ser-58 and His-78 each contribute to the an alcohol site. Residue Ser-58 coordinates NAD(+). Residues 212 to 217 (GLGSIG), Asp-236, Lys-241, 306 to 308 (LGV), Phe-334, and Arg-384 contribute to the NAD(+) site.

The protein belongs to the zinc-containing alcohol dehydrogenase family. Class-III subfamily. Homodimer. It depends on Zn(2+) as a cofactor.

The protein resides in the cytoplasm. The enzyme catalyses a primary alcohol + NAD(+) = an aldehyde + NADH + H(+). It catalyses the reaction a secondary alcohol + NAD(+) = a ketone + NADH + H(+). The polypeptide is Alcohol dehydrogenase-like 7 (Arabidopsis thaliana (Mouse-ear cress)).